A 342-amino-acid chain; its full sequence is S-adenosylmethionine:tRNA ribosyltransferase-isomerase (342 aa).

This sequence belongs to the QueA family. As to quaternary structure, monomer.

It is found in the cytoplasm. It carries out the reaction 7-aminomethyl-7-carbaguanosine(34) in tRNA + S-adenosyl-L-methionine = epoxyqueuosine(34) in tRNA + adenine + L-methionine + 2 H(+). The protein operates within tRNA modification; tRNA-queuosine biosynthesis. Transfers and isomerizes the ribose moiety from AdoMet to the 7-aminomethyl group of 7-deazaguanine (preQ1-tRNA) to give epoxyqueuosine (oQ-tRNA). The sequence is that of S-adenosylmethionine:tRNA ribosyltransferase-isomerase from Shouchella clausii (strain KSM-K16) (Alkalihalobacillus clausii).